Consider the following 200-residue polypeptide: dITP/XTP pyrophosphatase (200 aa).

5-10 lines the substrate pocket; sequence TRNEGK. The Proton acceptor role is filled by aspartate 67. Aspartate 67 is a Mg(2+) binding site. Substrate contacts are provided by residues serine 68, 151-154, lysine 174, and 179-180; these read FGYD and HR.

It belongs to the HAM1 NTPase family. Homodimer. The cofactor is Mg(2+).

It catalyses the reaction XTP + H2O = XMP + diphosphate + H(+). The enzyme catalyses dITP + H2O = dIMP + diphosphate + H(+). The catalysed reaction is ITP + H2O = IMP + diphosphate + H(+). In terms of biological role, pyrophosphatase that catalyzes the hydrolysis of nucleoside triphosphates to their monophosphate derivatives, with a high preference for the non-canonical purine nucleotides XTP (xanthosine triphosphate), dITP (deoxyinosine triphosphate) and ITP. Seems to function as a house-cleaning enzyme that removes non-canonical purine nucleotides from the nucleotide pool, thus preventing their incorporation into DNA/RNA and avoiding chromosomal lesions. The polypeptide is dITP/XTP pyrophosphatase (Streptococcus pneumoniae serotype 4 (strain ATCC BAA-334 / TIGR4)).